The sequence spans 555 residues: Serine/threonine-protein kinase AGC1-7 (555 aa).

The segment at 1-126 (MLTKPGKKLD…PSKPHTGGDI (126 aa)) is disordered. 2 stretches are compositionally biased toward basic and acidic residues: residues 7 to 16 (KKLDSSESTH) and 35 to 54 (PRKEMQQKPLFDPKKMDNLI). Over residues 84-118 (SQSNLNTKPNNNNSNNNSNMSSRSNSIESTSSNPS) the composition is skewed to low complexity. In terms of domain architecture, Protein kinase spans 146-480 (FRLLKRLGYG…ATEIKQHPFF (335 aa)). ATP contacts are provided by residues 152–160 (LGYGDIGSV) and Lys175. Residue Asp271 is the Proton acceptor of the active site. An AGC-kinase C-terminal domain is found at 481 to 555 (EGVNWALIRS…DPDYIDFEYF (75 aa)). The interval 514–547 (AAVDGGGKKNNNGAGGGCSTGGGDNKPNGDCNDP) is disordered. Positions 526–537 (GAGGGCSTGGGD) are enriched in gly residues.

This sequence belongs to the protein kinase superfamily. AGC Ser/Thr protein kinase family. Interacts with PDPK1/PDK1. In terms of processing, autophosphorylated and phosphorylated by PDPK1/PDK1. As to expression, specifically expressed in pollen grains.

The protein resides in the cytoplasm. The enzyme catalyses L-seryl-[protein] + ATP = O-phospho-L-seryl-[protein] + ADP + H(+). The catalysed reaction is L-threonyl-[protein] + ATP = O-phospho-L-threonyl-[protein] + ADP + H(+). With respect to regulation, activated by PDPK1/PDK1. In terms of biological role, functions redudantly with AGC1-5 as signaling component in the pollen tube. Required for polarized growth of pollen tubes. The protein is Serine/threonine-protein kinase AGC1-7 of Arabidopsis thaliana (Mouse-ear cress).